Reading from the N-terminus, the 130-residue chain is Small ribosomal subunit protein uS8 (130 aa).

This sequence belongs to the universal ribosomal protein uS8 family. Part of the 30S ribosomal subunit. Contacts proteins S5 and S12.

In terms of biological role, one of the primary rRNA binding proteins, it binds directly to 16S rRNA central domain where it helps coordinate assembly of the platform of the 30S subunit. This Pseudomonas putida (strain ATCC 700007 / DSM 6899 / JCM 31910 / BCRC 17059 / LMG 24140 / F1) protein is Small ribosomal subunit protein uS8.